The primary structure comprises 449 residues: Phosphoglucosamine mutase (449 aa).

The Phosphoserine intermediate role is filled by serine 102. Serine 102, aspartate 241, aspartate 243, and aspartate 245 together coordinate Mg(2+). Serine 102 is subject to Phosphoserine.

The protein belongs to the phosphohexose mutase family. Mg(2+) serves as cofactor. Post-translationally, activated by phosphorylation.

It catalyses the reaction alpha-D-glucosamine 1-phosphate = D-glucosamine 6-phosphate. Functionally, catalyzes the conversion of glucosamine-6-phosphate to glucosamine-1-phosphate. This Roseobacter denitrificans (strain ATCC 33942 / OCh 114) (Erythrobacter sp. (strain OCh 114)) protein is Phosphoglucosamine mutase.